The primary structure comprises 385 residues: GTPase Obg (385 aa).

The Obg domain occupies 1–159; sequence MKFVDEVEIR…RNLKLELLLL (159 aa). Residues 160–333 enclose the OBG-type G domain; it reads ADVGLLGLPN…LIHDVMTLLE (174 aa). Residues 166 to 173, 191 to 195, 213 to 216, 283 to 286, and 314 to 316 each bind GTP; these read GLPNAGKS, FTTLI, DIPG, NKID, and SAI. Positions 173 and 193 each coordinate Mg(2+).

Belongs to the TRAFAC class OBG-HflX-like GTPase superfamily. OBG GTPase family. As to quaternary structure, monomer. Requires Mg(2+) as cofactor.

It is found in the cytoplasm. Functionally, an essential GTPase which binds GTP, GDP and possibly (p)ppGpp with moderate affinity, with high nucleotide exchange rates and a fairly low GTP hydrolysis rate. Plays a role in control of the cell cycle, stress response, ribosome biogenesis and in those bacteria that undergo differentiation, in morphogenesis control. The protein is GTPase Obg of Pseudoalteromonas translucida (strain TAC 125).